An 87-amino-acid polypeptide reads, in one-letter code: Phospholemman (87 aa).

The first 20 residues, 1–20 (MASLSHILVLWVGILTVVNA), serve as a signal peptide directing secretion. Topologically, residues 21-35 (EAPQEHDPFTYDYQS) are extracellular. The chain crosses the membrane as a helical span at residues 36–56 (LRIGGLIIAGILFILGILIVL). Topologically, residues 57–87 (SRRCRCKFNQQQSLGKMRSPHLAAQFSSESC) are cytoplasmic. The S-palmitoyl cysteine moiety is linked to residue Cys-60. The residue at position 62 (Cys-62) is an S-glutathionyl cysteine; alternate. Cys-62 is lipidated: S-palmitoyl cysteine; alternate. Position 75 is a phosphoserine; by PKA and PKC (Ser-75). The residue at position 83 (Ser-83) is a Phosphoserine; by PKA.

Belongs to the FXYD family. In terms of assembly, homotetramer. Monomer. Regulatory subunit of the sodium/potassium-transporting ATPase (NKA) which is composed of a catalytic alpha subunit, a non-catalytic beta subunit and an additional regulatory subunit. The monomeric form associates with NKA while the oligomeric form does not. Interacts with the catalytic alpha-1 subunit ATP1A1. Also interacts with the catalytic alpha-2 and alpha-3 subunits ATP1A2 and ATP1A3. Very little interaction with ATP1A1, ATP1A2 or ATP1A3 when phosphorylated at Ser-83. Interacts with the non-catalytic beta-1 subunit ATP1B1. Oxidative stress decreases interaction with ATP1A1 but increases interaction with ATP1B1. Post-translationally, major plasma membrane substrate for cAMP-dependent protein kinase (PKA) and protein kinase C (PKC) in several different tissues. Phosphorylated in response to insulin and adrenergic stimulation. Phosphorylation at Ser-83 stimulates sodium/potassium-transporting ATPase activity while the unphosphorylated form inhibits sodium/potassium-transporting ATPase activity. Phosphorylation increases tetramerization, decreases binding to ATP1A1 and reduces inhibition of ATP1A1 activity. Phosphorylation at Ser-75 leads to greatly reduced interaction with ATP1A1, ATP1A2 and ATP1A3. May be phosphorylated by DMPK. Palmitoylation increases half-life and stability and is enhanced upon phosphorylation at Ser-83 by PKA.

It localises to the cell membrane. It is found in the sarcolemma. The protein localises to the apical cell membrane. Its subcellular location is the membrane. The protein resides in the caveola. It localises to the T-tubule. Its function is as follows. Associates with and regulates the activity of the sodium/potassium-transporting ATPase (NKA) which transports Na(+) out of the cell and K(+) into the cell. Inhibits NKA activity in its unphosphorylated state and stimulates activity when phosphorylated. Reduces glutathionylation of the NKA beta-1 subunit ATP1B1, thus reversing glutathionylation-mediated inhibition of ATP1B1. Contributes to female sexual development by maintaining the excitability of neurons which secrete gonadotropin-releasing hormone. The chain is Phospholemman from Sus scrofa (Pig).